Consider the following 333-residue polypeptide: DNA repair and recombination protein RadA (333 aa).

Gly-127–Thr-134 is an ATP binding site.

It belongs to the eukaryotic RecA-like protein family.

Functionally, involved in DNA repair and in homologous recombination. Binds and assemble on single-stranded DNA to form a nucleoprotein filament. Hydrolyzes ATP in a ssDNA-dependent manner and promotes DNA strand exchange between homologous DNA molecules. This chain is DNA repair and recombination protein RadA, found in Pyrobaculum aerophilum (strain ATCC 51768 / DSM 7523 / JCM 9630 / CIP 104966 / NBRC 100827 / IM2).